Consider the following 288-residue polypeptide: Probable proteasome subunit alpha type-7 (288 aa).

Residue T2 is modified to N-acetylthreonine. The segment at I247–E288 is disordered. Residues G249–N268 show a composition bias toward acidic residues. The span at A269–T279 shows a compositional bias: low complexity.

It belongs to the peptidase T1A family. The 26S proteasome consists of a 20S proteasome core and two 19S regulatory subunits. The 20S proteasome core is composed of 28 subunits that are arranged in four stacked rings, resulting in a barrel-shaped structure. The two end rings are each formed by seven alpha subunits, and the two central rings are each formed by seven beta subunits. The catalytic chamber with the active sites is on the inside of the barrel. In terms of processing, the alpha and beta forms are probably products of the same gene with different post-translational modifications.

Its subcellular location is the cytoplasm. It is found in the nucleus. Functionally, the proteasome degrades poly-ubiquitinated proteins in the cytoplasm and in the nucleus. It is essential for the regulated turnover of proteins and for the removal of misfolded proteins. The proteasome is a multicatalytic proteinase complex that is characterized by its ability to cleave peptides with Arg, Phe, Tyr, Leu, and Glu adjacent to the leaving group at neutral or slightly basic pH. It has an ATP-dependent proteolytic activity. This is Probable proteasome subunit alpha type-7 (PRE10) from Saccharomyces cerevisiae (strain ATCC 204508 / S288c) (Baker's yeast).